We begin with the raw amino-acid sequence, 201 residues long: Probable nicotinate-nucleotide adenylyltransferase (201 aa).

This sequence belongs to the NadD family.

The catalysed reaction is nicotinate beta-D-ribonucleotide + ATP + H(+) = deamido-NAD(+) + diphosphate. Its pathway is cofactor biosynthesis; NAD(+) biosynthesis; deamido-NAD(+) from nicotinate D-ribonucleotide: step 1/1. Catalyzes the reversible adenylation of nicotinate mononucleotide (NaMN) to nicotinic acid adenine dinucleotide (NaAD). The chain is Probable nicotinate-nucleotide adenylyltransferase from Carboxydothermus hydrogenoformans (strain ATCC BAA-161 / DSM 6008 / Z-2901).